The primary structure comprises 20 residues: AVXHPGTXVSXAAXXXFIPL.

It belongs to the peroxidase family. Ligninase subfamily.

It is found in the secreted. The enzyme catalyses 2 Mn(2+) + H2O2 + 2 H(+) = 2 Mn(3+) + 2 H2O. In terms of biological role, catalyzes the oxidation of Mn(2+) to Mn(3+). The latter, acting as a diffusible redox mediator, is capable of oxidizing a variety of lignin compounds. In Phanerodontia chrysosporium (White-rot fungus), this protein is Manganese peroxidase H5.